Consider the following 396-residue polypeptide: Phosphoglycerate kinase (396 aa).

Substrate contacts are provided by residues 21–23 (DFN), Arg36, 59–62 (HLGK), Arg119, and Arg156. Residues Lys206, Gly294, Glu325, and 352-355 (GGDS) each bind ATP.

Belongs to the phosphoglycerate kinase family. In terms of assembly, monomer.

The protein localises to the cytoplasm. It catalyses the reaction (2R)-3-phosphoglycerate + ATP = (2R)-3-phospho-glyceroyl phosphate + ADP. It functions in the pathway carbohydrate degradation; glycolysis; pyruvate from D-glyceraldehyde 3-phosphate: step 2/5. The sequence is that of Phosphoglycerate kinase from Listeria welshimeri serovar 6b (strain ATCC 35897 / DSM 20650 / CCUG 15529 / CIP 8149 / NCTC 11857 / SLCC 5334 / V8).